Consider the following 119-residue polypeptide: Large ribosomal subunit protein bL20 (119 aa).

Belongs to the bacterial ribosomal protein bL20 family.

Binds directly to 23S ribosomal RNA and is necessary for the in vitro assembly process of the 50S ribosomal subunit. It is not involved in the protein synthesizing functions of that subunit. The polypeptide is Large ribosomal subunit protein bL20 (Listeria innocua serovar 6a (strain ATCC BAA-680 / CLIP 11262)).